A 242-amino-acid chain; its full sequence is Probable transcriptional regulatory protein Cphy_2507 (242 aa).

It belongs to the TACO1 family.

It is found in the cytoplasm. In Lachnoclostridium phytofermentans (strain ATCC 700394 / DSM 18823 / ISDg) (Clostridium phytofermentans), this protein is Probable transcriptional regulatory protein Cphy_2507.